Consider the following 153-residue polypeptide: Antibacterial peptide PMAP-23 (153 aa).

The first 29 residues, 1–29, serve as a signal peptide directing secretion; sequence METQRASLCLGRWSLWLLLLGLVVPSASA. Residue Gln-30 is modified to Pyrrolidone carboxylic acid. Residues 30–130 constitute a propeptide that is removed on maturation; that stretch reads QALSYREAVL…DITCNQLQSV (101 aa). Residues 61–80 are disordered; the sequence is DQPPKADEDPGTPKPVSFTV. 2 disulfide bridges follow: Cys-85-Cys-96 and Cys-107-Cys-124.

This sequence belongs to the cathelicidin family.

The protein localises to the secreted. Functionally, exerts antimicrobial activity against both Gram-positive and negative bacteria at concentrations of 2-16 micro molar. Its activity appears to be mediated by its ability to damage bacterial membranes. This chain is Antibacterial peptide PMAP-23 (PMAP23), found in Sus scrofa (Pig).